A 295-amino-acid chain; its full sequence is Probable aspartoacylase (295 aa).

Histidine 13 and glutamate 16 together coordinate Zn(2+). Substrate is bound by residues arginine 54 and 61 to 62 (NR). Residue histidine 100 coordinates Zn(2+). Substrate contacts are provided by glutamate 158 and tyrosine 268.

The protein belongs to the AspA/AstE family. Aspartoacylase subfamily. The cofactor is Zn(2+).

The enzyme catalyses an N-acyl-L-aspartate + H2O = a carboxylate + L-aspartate. This is Probable aspartoacylase from Prochlorococcus marinus subsp. pastoris (strain CCMP1986 / NIES-2087 / MED4).